Here is a 257-residue protein sequence, read N- to C-terminus: Diacetyl reductase [(S)-acetoin forming] (257 aa).

6-30 (IITGSAGGLGKGIAERLANDGFNIV) contributes to the NAD(+) binding site. Ser-139 contacts substrate. The active-site Proton acceptor is Tyr-152. Residue Lys-156 is part of the active site.

This sequence belongs to the short-chain dehydrogenases/reductases (SDR) family.

It catalyses the reaction (S)-acetoin + NAD(+) = diacetyl + NADH + H(+). In terms of biological role, catalyzes the irreversible reduction of 2,3-butanediol to (S)-acetoin in the presence of NADH. This Staphylococcus epidermidis (strain ATCC 35984 / DSM 28319 / BCRC 17069 / CCUG 31568 / BM 3577 / RP62A) protein is Diacetyl reductase [(S)-acetoin forming] (butA).